Here is a 375-residue protein sequence, read N- to C-terminus: Growth/differentiation factor 8 (375 aa).

Positions 1 to 18 (MQKLQISVYIYLFMLIVA) are cleaved as a signal peptide. Positions 19 to 266 (GPVDLNENSE…VTDTPKRSRR (248 aa)) are excised as a propeptide. 2 N-linked (GlcNAc...) asparagine glycosylation sites follow: Asn47 and Asn71. 4 disulfide bridges follow: Cys272–Cys282, Cys281–Cys340, Cys309–Cys372, and Cys313–Cys374.

This sequence belongs to the TGF-beta family. Homodimer; disulfide-linked. Interacts with WFIKKN2, leading to inhibit its activity. Interacts with FSTL3. Synthesized as large precursor molecule that undergoes proteolytic cleavage to generate an N-terminal propeptide and a disulfide linked C-terminal dimer, which is the biologically active molecule. The circulating form consists of a latent complex of the C-terminal dimer and other proteins, including its propeptide, which maintain the C-terminal dimer in a latent, inactive state. Ligand activation requires additional cleavage of the prodomain by a tolloid-like metalloproteinase.

The protein resides in the secreted. Acts specifically as a negative regulator of skeletal muscle growth. This chain is Growth/differentiation factor 8 (MSTN), found in Bubalus bubalis (Domestic water buffalo).